The following is a 373-amino-acid chain: MASQKPNLAALSAAGVSVWLDDLSRDRLRSGNLQELIDTKSVVGVTTNPSIFQKALSEGHDYDAQVAELAERGADVDATIRTVTTDDVRNACDVLAPRWEASGGVDGRVSIEVDPRLAHETDKTIQQAVELWKIVDRPNLLIKIPATKAGLPAIAAVLAEGISVNVTLIFSVDRHRGVMDAYLTGMEKAAQAGHDLSKIHSVASFFVSRVDTEIDNRLEQIGSAEALALRGQAGVANARLAYAAYQEVFEGDARYQALKERGARVQRPLWASTGVKNPDYSDTLYVTELVAPHTVNTMPEKTLDAVADHGVVKGDSITGTSGDAQQVFDKLEAIGIDLSDVFDVLESEGVEKFEASWKELLDATQAQLDALAK.

K143 (schiff-base intermediate with substrate) is an active-site residue.

Belongs to the transaldolase family. Type 2 subfamily.

It is found in the cytoplasm. The catalysed reaction is D-sedoheptulose 7-phosphate + D-glyceraldehyde 3-phosphate = D-erythrose 4-phosphate + beta-D-fructose 6-phosphate. Its pathway is carbohydrate degradation; pentose phosphate pathway; D-glyceraldehyde 3-phosphate and beta-D-fructose 6-phosphate from D-ribose 5-phosphate and D-xylulose 5-phosphate (non-oxidative stage): step 2/3. Transaldolase is important for the balance of metabolites in the pentose-phosphate pathway. This Mycobacterium ulcerans (strain Agy99) protein is Transaldolase.